A 176-amino-acid polypeptide reads, in one-letter code: ATP synthase subunit delta (176 aa).

Belongs to the ATPase delta chain family. In terms of assembly, F-type ATPases have 2 components, F(1) - the catalytic core - and F(0) - the membrane proton channel. F(1) has five subunits: alpha(3), beta(3), gamma(1), delta(1), epsilon(1). F(0) has three main subunits: a(1), b(2) and c(10-14). The alpha and beta chains form an alternating ring which encloses part of the gamma chain. F(1) is attached to F(0) by a central stalk formed by the gamma and epsilon chains, while a peripheral stalk is formed by the delta and b chains.

The protein resides in the cell inner membrane. F(1)F(0) ATP synthase produces ATP from ADP in the presence of a proton or sodium gradient. F-type ATPases consist of two structural domains, F(1) containing the extramembraneous catalytic core and F(0) containing the membrane proton channel, linked together by a central stalk and a peripheral stalk. During catalysis, ATP synthesis in the catalytic domain of F(1) is coupled via a rotary mechanism of the central stalk subunits to proton translocation. Its function is as follows. This protein is part of the stalk that links CF(0) to CF(1). It either transmits conformational changes from CF(0) to CF(1) or is implicated in proton conduction. This Nitratiruptor sp. (strain SB155-2) protein is ATP synthase subunit delta.